Consider the following 1021-residue polypeptide: Probable LRR receptor-like serine/threonine-protein kinase RFK1 (1021 aa).

A signal peptide spans 1–39; that stretch reads MISLYQILAEKKKKKKNDLNIFAFSVFAIICFKFYSVNA. Over 41-625 the chain is Extracellular; the sequence is KLPQQEVDAL…PKTGMSPGAY (585 aa). Asparagine 96 carries N-linked (GlcNAc...) asparagine glycosylation. 2 LRR repeats span residues 99-122 and 123-146; these read DCHV…IVKL and PYLR…WASS. N-linked (GlcNAc...) asparagine glycans are attached at residues asparagine 136, asparagine 147, and asparagine 168. LRR repeat units lie at residues 148–168, 169–192, 193–216, 218–240, and 241–266; these read LTFI…EFGN, SSLT…LGNL, VHLK…LARL, NMTD…IQNW, and KQLE…VLSN. Residue asparagine 218 is glycosylated (N-linked (GlcNAc...) asparagine). Asparagine 287 and asparagine 300 each carry an N-linked (GlcNAc...) asparagine glycan. LRR repeat units follow at residues 288–312, 313–336, 338–359, and 361–381; these read VTGL…LSHL, KELE…AQAE, LRFI…LLRD, and ITVD…RACR. 2 N-linked (GlcNAc...) asparagine glycosylation sites follow: asparagine 486 and asparagine 512. The chain crosses the membrane as a helical span at residues 626-646; sequence IAIGIGAPCLIIFILGFLWIC. Over 647–1021 the chain is Cytoplasmic; that stretch reads GCLPRCGRQR…QERKKEESRP (375 aa). Threonine 670 is modified (phosphothreonine). In terms of domain architecture, Protein kinase spans 681 to 956; sequence FNPTNKIGEG…EVVAMLEGLY (276 aa). Residues 687 to 695 and lysine 709 contribute to the ATP site; that span reads IGEGGFGAV. A Phosphotyrosine modification is found at tyrosine 754. The active-site Proton acceptor is the aspartate 807. Serine 840 is modified (phosphoserine). A phosphothreonine mark is found at threonine 841 and threonine 846. At tyrosine 854 the chain carries Phosphotyrosine. The interval 985-1021 is disordered; the sequence is ENNSKTQCSVKSYPSSSSTSSGAGQAVQERKKEESRP. The span at 993 to 1005 shows a compositional bias: low complexity; it reads SVKSYPSSSSTSS. The span at 1012–1021 shows a compositional bias: basic and acidic residues; the sequence is QERKKEESRP.

It belongs to the protein kinase superfamily. Ser/Thr protein kinase family. In terms of tissue distribution, mostly expressed in flower buds, especially in stamens.

It is found in the membrane. The enzyme catalyses L-seryl-[protein] + ATP = O-phospho-L-seryl-[protein] + ADP + H(+). It carries out the reaction L-threonyl-[protein] + ATP = O-phospho-L-threonyl-[protein] + ADP + H(+). This chain is Probable LRR receptor-like serine/threonine-protein kinase RFK1 (RKF1), found in Arabidopsis thaliana (Mouse-ear cress).